We begin with the raw amino-acid sequence, 556 residues long: Dihydroxy-acid dehydratase (556 aa).

Mg(2+) is bound at residue Asp-78. A [2Fe-2S] cluster-binding site is contributed by Cys-119. The Mg(2+) site is built by Asp-120 and Lys-121. N6-carboxylysine is present on Lys-121. Cys-191 contributes to the [2Fe-2S] cluster binding site. Glu-442 provides a ligand contact to Mg(2+). Ser-468 acts as the Proton acceptor in catalysis.

This sequence belongs to the IlvD/Edd family. As to quaternary structure, homodimer. It depends on [2Fe-2S] cluster as a cofactor. Mg(2+) serves as cofactor.

It catalyses the reaction (2R)-2,3-dihydroxy-3-methylbutanoate = 3-methyl-2-oxobutanoate + H2O. It carries out the reaction (2R,3R)-2,3-dihydroxy-3-methylpentanoate = (S)-3-methyl-2-oxopentanoate + H2O. It participates in amino-acid biosynthesis; L-isoleucine biosynthesis; L-isoleucine from 2-oxobutanoate: step 3/4. The protein operates within amino-acid biosynthesis; L-valine biosynthesis; L-valine from pyruvate: step 3/4. Functionally, functions in the biosynthesis of branched-chain amino acids. Catalyzes the dehydration of (2R,3R)-2,3-dihydroxy-3-methylpentanoate (2,3-dihydroxy-3-methylvalerate) into 2-oxo-3-methylpentanoate (2-oxo-3-methylvalerate) and of (2R)-2,3-dihydroxy-3-methylbutanoate (2,3-dihydroxyisovalerate) into 2-oxo-3-methylbutanoate (2-oxoisovalerate), the penultimate precursor to L-isoleucine and L-valine, respectively. The sequence is that of Dihydroxy-acid dehydratase from Clostridium kluyveri (strain NBRC 12016).